The primary structure comprises 231 residues: 5'-methylthioadenosine/S-adenosylhomocysteine nucleosidase (231 aa).

E12 acts as the Proton acceptor in catalysis. Residues G78, V153, and 174-175 (ME) contribute to the substrate site. The active-site Proton donor is the D198.

This sequence belongs to the PNP/UDP phosphorylase family. MtnN subfamily.

The catalysed reaction is S-adenosyl-L-homocysteine + H2O = S-(5-deoxy-D-ribos-5-yl)-L-homocysteine + adenine. It catalyses the reaction S-methyl-5'-thioadenosine + H2O = 5-(methylsulfanyl)-D-ribose + adenine. The enzyme catalyses 5'-deoxyadenosine + H2O = 5-deoxy-D-ribose + adenine. The protein operates within amino-acid biosynthesis; L-methionine biosynthesis via salvage pathway; S-methyl-5-thio-alpha-D-ribose 1-phosphate from S-methyl-5'-thioadenosine (hydrolase route): step 1/2. Its function is as follows. Catalyzes the irreversible cleavage of the glycosidic bond in both 5'-methylthioadenosine (MTA) and S-adenosylhomocysteine (SAH/AdoHcy) to adenine and the corresponding thioribose, 5'-methylthioribose and S-ribosylhomocysteine, respectively. Also cleaves 5'-deoxyadenosine, a toxic by-product of radical S-adenosylmethionine (SAM) enzymes, into 5-deoxyribose and adenine. The protein is 5'-methylthioadenosine/S-adenosylhomocysteine nucleosidase of Vibrio parahaemolyticus serotype O3:K6 (strain RIMD 2210633).